Consider the following 250-residue polypeptide: Leucyl/phenylalanyl-tRNA--protein transferase (250 aa).

This sequence belongs to the L/F-transferase family.

Its subcellular location is the cytoplasm. The catalysed reaction is N-terminal L-lysyl-[protein] + L-leucyl-tRNA(Leu) = N-terminal L-leucyl-L-lysyl-[protein] + tRNA(Leu) + H(+). It carries out the reaction N-terminal L-arginyl-[protein] + L-leucyl-tRNA(Leu) = N-terminal L-leucyl-L-arginyl-[protein] + tRNA(Leu) + H(+). It catalyses the reaction L-phenylalanyl-tRNA(Phe) + an N-terminal L-alpha-aminoacyl-[protein] = an N-terminal L-phenylalanyl-L-alpha-aminoacyl-[protein] + tRNA(Phe). Functionally, functions in the N-end rule pathway of protein degradation where it conjugates Leu, Phe and, less efficiently, Met from aminoacyl-tRNAs to the N-termini of proteins containing an N-terminal arginine or lysine. This is Leucyl/phenylalanyl-tRNA--protein transferase from Cupriavidus pinatubonensis (strain JMP 134 / LMG 1197) (Cupriavidus necator (strain JMP 134)).